A 697-amino-acid polypeptide reads, in one-letter code: Disintegrin and metalloproteinase domain-containing protein 26A (697 aa).

Positions 1–22 are cleaved as a signal peptide; that stretch reads MFLKFCLWTMFFFSAWSPIGHA. The propeptide occupies 23–187; the sequence is KYSSLLEVVT…NAPTLLQIPY (165 aa). Asparagine 127 is a glycosylation site (N-linked (GlcNAc...) asparagine). Positions 159-166 match the Cysteine switch motif; that stretch reads MRCGLSEE. Zn(2+) is bound at residue cysteine 161. Over 188 to 671 the chain is Extracellular; that stretch reads ENWWTHHRFI…PPLPLSHSKW (484 aa). The 191-residue stretch at 195 to 385 folds into the Peptidase M12B domain; sequence RFIEYFVVLD…TKRSCLYDIP (191 aa). A glycan (N-linked (GlcNAc...) asparagine) is linked at asparagine 214. 3 cysteine pairs are disulfide-bonded: cysteine 305–cysteine 380, cysteine 344–cysteine 366, and cysteine 346–cysteine 351. Histidine 329 lines the Zn(2+) pocket. The active site involves glutamate 330. 2 residues coordinate Zn(2+): histidine 333 and histidine 339. Residues asparagine 365, asparagine 391, asparagine 464, asparagine 506, asparagine 531, and asparagine 573 are each glycosylated (N-linked (GlcNAc...) asparagine). The Disintegrin domain occupies 392-478; that stretch reads LTVCGNKVVE…ECPGDVYKAD (87 aa). A disulfide bond links cysteine 450 and cysteine 470. The region spanning 616–649 is the EGF-like domain; it reads LVSNCSPQLYHMQGICNNKQHCHCGVTWKPPDCQ. 2 disulfide bridges follow: cysteine 620/cysteine 631 and cysteine 639/cysteine 648. Residues 672-692 form a helical membrane-spanning segment; that stretch reads IVYILIVLDVCIVIIIYLFSF. Residues 693–697 are Cytoplasmic-facing; it reads YKLSK.

Zn(2+) serves as cofactor. In terms of tissue distribution, expressed in sperm (at protein level). Expressed specifically in testis.

It localises to the membrane. Sperm surface membrane protein that may be involved in spermatogenesis and fertilization. The protein is Disintegrin and metalloproteinase domain-containing protein 26A of Mus musculus (Mouse).